A 273-amino-acid polypeptide reads, in one-letter code: 4-hydroxy-tetrahydrodipicolinate reductase (273 aa).

NAD(+) is bound by residues Gly12–Met17 and Glu38. An NADP(+)-binding site is contributed by Arg39. NAD(+)-binding positions include Gly102–Thr104 and Ala126–Phe129. The active-site Proton donor/acceptor is His159. Residue His160 coordinates (S)-2,3,4,5-tetrahydrodipicolinate. Residue Lys163 is the Proton donor of the active site. Residue Gly169–Thr170 participates in (S)-2,3,4,5-tetrahydrodipicolinate binding.

The protein belongs to the DapB family. Homotetramer.

Its subcellular location is the cytoplasm. The catalysed reaction is (S)-2,3,4,5-tetrahydrodipicolinate + NAD(+) + H2O = (2S,4S)-4-hydroxy-2,3,4,5-tetrahydrodipicolinate + NADH + H(+). It carries out the reaction (S)-2,3,4,5-tetrahydrodipicolinate + NADP(+) + H2O = (2S,4S)-4-hydroxy-2,3,4,5-tetrahydrodipicolinate + NADPH + H(+). It functions in the pathway amino-acid biosynthesis; L-lysine biosynthesis via DAP pathway; (S)-tetrahydrodipicolinate from L-aspartate: step 4/4. In terms of biological role, catalyzes the conversion of 4-hydroxy-tetrahydrodipicolinate (HTPA) to tetrahydrodipicolinate. This is 4-hydroxy-tetrahydrodipicolinate reductase from Yersinia enterocolitica serotype O:8 / biotype 1B (strain NCTC 13174 / 8081).